Consider the following 253-residue polypeptide: tRNA 2'-phosphotransferase 1 (253 aa).

Position 1 is an N-acetylmethionine (Met1). Disordered regions lie at residues 1–29 and 225–253; these read MNFS…DRDV and KPLS…RIQQ. Phosphoserine is present on Ser240. Residues 243–253 show a composition bias toward basic residues; the sequence is HSSRERRRIQQ.

Belongs to the KptA/TPT1 family. As to expression, widely expressed. Weakly or not expressed in lung, spleen, small intestine and peripheral blood leukocytes.

The catalysed reaction is 2'-phospho-[ligated tRNA] + NAD(+) = mature tRNA + ADP-alpha-D-ribose 1'',2''-cyclic phosphate + nicotinamide. Catalyzes the last step of tRNA splicing, the transfer of the splice junction 2'-phosphate from ligated tRNA to NAD to produce ADP-ribose 1''-2'' cyclic phosphate. The sequence is that of tRNA 2'-phosphotransferase 1 (TRPT1) from Homo sapiens (Human).